A 1038-amino-acid chain; its full sequence is Translation initiation factor IF-2 (1038 aa).

The tract at residues 48 to 426 (DALQGPGGNA…RQRRQEYEAM (379 aa)) is disordered. The segment covering 58 to 87 (GKSAAKPGAPRKAAPAKPAAPSPAAAARPA) has biased composition (low complexity). Over residues 88–99 (APKPGAPAPKPA) the composition is skewed to pro residues. Positions 100-114 (EAPSSTPAAPSAPSA) are enriched in low complexity. Pro residues predominate over residues 115 to 125 (GPRPGPKPAPK). Residues 126 to 141 (AAPVTPVPAAEFSAPA) are compositionally biased toward low complexity. Positions 142–153 (PAQPAAPQPQAP) are enriched in pro residues. Over residues 177 to 199 (DGGRDGGQRDGGRGGERGGDRPA) the composition is skewed to basic and acidic residues. Over residues 200 to 219 (RPAGQGAPRPGGARPAGPRP) the composition is skewed to low complexity. Gly residues predominate over residues 261–277 (SGPGGAPRPQGGQGQGG). The segment covering 299-315 (GNRPNPGMMPQRPAAGP) has biased composition (low complexity). Residues 319-406 (PGGGGRGPGG…GTQGAFGRPG (88 aa)) show a composition bias toward gly residues. Residues 410–419 (RRGRKSKRQR) are compositionally biased toward basic residues. Residues 531 to 703 (SRPPVVTVMG…VVLTADASLD (173 aa)) form the tr-type G domain. Residues 540-547 (GHVDHGKT) are G1. Residue 540–547 (GHVDHGKT) participates in GTP binding. Residues 565 to 569 (GITQH) form a G2 region. Residues 590 to 593 (DTPG) are G3. GTP is bound by residues 590-594 (DTPGH) and 644-647 (NKID). Residues 644–647 (NKID) are G4. A G5 region spans residues 680 to 682 (SAK).

The protein belongs to the TRAFAC class translation factor GTPase superfamily. Classic translation factor GTPase family. IF-2 subfamily.

The protein localises to the cytoplasm. Its function is as follows. One of the essential components for the initiation of protein synthesis. Protects formylmethionyl-tRNA from spontaneous hydrolysis and promotes its binding to the 30S ribosomal subunits. Also involved in the hydrolysis of GTP during the formation of the 70S ribosomal complex. In Streptomyces griseus subsp. griseus (strain JCM 4626 / CBS 651.72 / NBRC 13350 / KCC S-0626 / ISP 5235), this protein is Translation initiation factor IF-2.